The sequence spans 318 residues: Cobalamin biosynthesis protein CobD (318 aa).

5 helical membrane passes run 56–76, 78–98, 153–173, 204–224, and 298–318; these read VLWLLVVGITWLVSWGFLWLM, EINPWLGWLAQVWMIYTLLAG, VDGVIAPLFFLMLGGAPLAMA, LANWLPARLSWVLLSAAAWLI, and MMASLLALLLFALTHLLLVGI.

It belongs to the CobD/CbiB family.

The protein resides in the cell membrane. It participates in cofactor biosynthesis; adenosylcobalamin biosynthesis. Its function is as follows. Converts cobyric acid to cobinamide by the addition of aminopropanol on the F carboxylic group. The chain is Cobalamin biosynthesis protein CobD from Yersinia enterocolitica serotype O:8 / biotype 1B (strain NCTC 13174 / 8081).